A 192-amino-acid chain; its full sequence is Pyridoxal 5'-phosphate synthase subunit PdxT (192 aa).

53–55 (GES) is a binding site for L-glutamine. Cys82 (nucleophile) is an active-site residue. Residues Arg108 and 134-135 (IR) contribute to the L-glutamine site. Active-site charge relay system residues include His170 and Glu172.

It belongs to the glutaminase PdxT/SNO family. As to quaternary structure, in the presence of PdxS, forms a dodecamer of heterodimers. Only shows activity in the heterodimer.

It catalyses the reaction aldehydo-D-ribose 5-phosphate + D-glyceraldehyde 3-phosphate + L-glutamine = pyridoxal 5'-phosphate + L-glutamate + phosphate + 3 H2O + H(+). It carries out the reaction L-glutamine + H2O = L-glutamate + NH4(+). It functions in the pathway cofactor biosynthesis; pyridoxal 5'-phosphate biosynthesis. In terms of biological role, catalyzes the hydrolysis of glutamine to glutamate and ammonia as part of the biosynthesis of pyridoxal 5'-phosphate. The resulting ammonia molecule is channeled to the active site of PdxS. This chain is Pyridoxal 5'-phosphate synthase subunit PdxT, found in Methanosphaera stadtmanae (strain ATCC 43021 / DSM 3091 / JCM 11832 / MCB-3).